Here is a 114-residue protein sequence, read N- to C-terminus: Protein ORF3 (114 aa).

The interval 1-28 (MGSRPCALGLFCCCSSCFCLCCPRHRPV) is membrane association. Hydrophobic regions lie at residues 6–22 (CALG…CLCC) and 33–53 (AAVG…GLIL). The induction of host SIRPA expression stretch occupies residues 6 to 22 (CALGLFCCCSSCFCLCC). Residues 28–68 (VSRLAAAVGGAAAVPAVVSGVTGLILSPSQSPIFIQPTPSP) are interaction with host HPX. The interval 48–72 (VTGLILSPSQSPIFIQPTPSPPMSP) is interaction with the capsid protein. Position 71 is a phosphoserine; by host (S71). A homodimerization, and interaction with host AMBP/bikunin region spans residues 72–114 (PLRPGLDLVFANPPDHSAPLGVTRPSAPPLPHVVDLPQLGPRR). Residues 91–114 (LGVTRPSAPPLPHVVDLPQLGPRR) are disordered. Residues 95–104 (RPSAPPLPHV) form an interaction with host SRC, HCK, FYN, PIK3R3 and GRB2 region. A PTAP/PSAP motif motif is present at residues 96–99 (PSAP).

The protein belongs to the hepevirus ORF3 protein family. Forms homooligomers. Interacts with host SRC, HCK, FYN, PIK3R3 and GRB2 (via SH3 domain); binding does not activate the kinases. Interacts with host AMBP/bikunin and AMBP/alpha-1-microglobulin peptides. Interacts with host HPX/hemopexin. Interacts (when phosphorylated) with capsid protein ORF2. Interacts with host TSG101; this interaction plays a role in viral release from the host cell. Interacts with host SIRPA; this interaction down-regulates the phosphorylation of host IRF3. In terms of processing, palmitoylated in the N-terminus.

It localises to the host endoplasmic reticulum membrane. It is found in the host cytoplasm. The protein resides in the host cytoskeleton. Its subcellular location is the virion. The protein localises to the host cell membrane. In terms of biological role, small multifunctional phosphoprotein involved in virion morphogenesis, egress and counteracting host innate immunity. Plays critical roles in the final steps of viral release by interacting with host TSG101, a member of the vacuolar protein-sorting pathway and using other cellular host proteins involved in vesicle formation pathway. Also acts as a viroporin and forms ion conductive pores allowing viral particle release. Impairs the generation of type I interferon by down-regulating host TLR3 and TLR7 as well as their downstream signaling pathways. Down-regulates the phosphorylation of host IRF3 via the interaction with host SIRP-alpha, thereby inhibiting IFN-I expression. Interacts with host microtubules. The sequence is that of Protein ORF3 from Hepatitis E virus genotype 1 (isolate Human/China/HeBei/1987) (HEV).